The primary structure comprises 411 residues: Inhibin beta B chain (411 aa).

Residues 1-28 (MDGLPGRALGAACLLLLVAGWLGPEAWG) form the signal peptide. Residues 28 to 69 (GSPTPPPSPAAPPPPPPPGAPGGSQDTCTSCGGGGGGFRRPE) form a disordered region. Positions 29-296 (SPTPPPSPAA…GDSRHRIRKR (268 aa)) are excised as a propeptide. A compositionally biased stretch (pro residues) spans 30 to 47 (PTPPPSPAAPPPPPPPGA). Asparagine 97 is a glycosylation site (N-linked (GlcNAc...) asparagine). Disulfide bonds link cysteine 300-cysteine 308, cysteine 307-cysteine 376, cysteine 336-cysteine 408, and cysteine 340-cysteine 410.

It belongs to the TGF-beta family. As to quaternary structure, dimeric, linked by one or more disulfide bonds. Inhibin B is a dimer of alpha and beta-B. Activin B is a homodimer of beta-B. Activin AB is a dimer of beta-A and beta-B. Interacts with FST and FSTL3. Activin B interacts with BMPR2. Uterus, testis, ovary, lung, kidney, brain, CJ7 embryonic stem cells, and possibly in liver.

The protein localises to the secreted. In terms of biological role, inhibins and activins inhibit and activate, respectively, the secretion of follitropin by the pituitary gland. Inhibins/activins are involved in regulating a number of diverse functions such as hypothalamic and pituitary hormone secretion, gonadal hormone secretion, germ cell development and maturation, erythroid differentiation, insulin secretion, nerve cell survival, embryonic axial development or bone growth, depending on their subunit composition. Inhibins appear to oppose the functions of activins. Its function is as follows. Activin B is a dimer of alpha and beta-B that plays a role in several essential biological processes including embryonic development, stem cell maintenance and differentiation, haematopoiesis, cell proliferation and wound healing. Signals through type I receptor ACVR1C, abundantly expressed in pancreatic beta cells, and type II receptors like ACVR2A. Upon ligand binding, these receptors phosphorylate intracellular signaling mediators SMAD2 and SMAD3, which form a complex with SMAD4, translocate to the nucleus, and regulate gene expression. Plays a crucial role in the induction of hepcidin by inflammation through activation of ACVR1C and subsequent phosphorylation of SMAD1/5/8. Regulates adipocyte lipid metabolism by decreasing non-esterified fatty acids and glycerol release and increases intracellular triglyceride content. Stimulates wound healing by promoting cell migration and hair follicle regeneration through the JNK and ERK signaling pathways downstream of RHOA. Functionally, inhibin B is a dimer of alpha and beta-B that plays a crucial role in the regulation of the reproductive system by inhibiting the secretion of follicle-stimulating hormone (FSH) from the anterior pituitary gland. Thereby, maintains reproductive homeostasis in both males and females. Acts as a more potent suppressor of FSH release than inhibin A. Functions as competitive receptor antagonist binding activin type II receptors with high affinity in the presence of the TGF-beta type III coreceptor/TGFBR3L. In Mus musculus (Mouse), this protein is Inhibin beta B chain (Inhbb).